A 338-amino-acid polypeptide reads, in one-letter code: Ketol-acid reductoisomerase (NADP(+)) (338 aa).

Residues M1–T181 enclose the KARI N-terminal Rossmann domain. NADP(+) is bound by residues Y24–Q27, R47, and S52. The active site involves H107. G133 provides a ligand contact to NADP(+). The KARI C-terminal knotted domain occupies N182–I327. D190, E194, E226, and E230 together coordinate Mg(2+). S251 contacts substrate.

The protein belongs to the ketol-acid reductoisomerase family. Mg(2+) serves as cofactor.

The catalysed reaction is (2R)-2,3-dihydroxy-3-methylbutanoate + NADP(+) = (2S)-2-acetolactate + NADPH + H(+). The enzyme catalyses (2R,3R)-2,3-dihydroxy-3-methylpentanoate + NADP(+) = (S)-2-ethyl-2-hydroxy-3-oxobutanoate + NADPH + H(+). It participates in amino-acid biosynthesis; L-isoleucine biosynthesis; L-isoleucine from 2-oxobutanoate: step 2/4. The protein operates within amino-acid biosynthesis; L-valine biosynthesis; L-valine from pyruvate: step 2/4. Functionally, involved in the biosynthesis of branched-chain amino acids (BCAA). Catalyzes an alkyl-migration followed by a ketol-acid reduction of (S)-2-acetolactate (S2AL) to yield (R)-2,3-dihydroxy-isovalerate. In the isomerase reaction, S2AL is rearranged via a Mg-dependent methyl migration to produce 3-hydroxy-3-methyl-2-ketobutyrate (HMKB). In the reductase reaction, this 2-ketoacid undergoes a metal-dependent reduction by NADPH to yield (R)-2,3-dihydroxy-isovalerate. The sequence is that of Ketol-acid reductoisomerase (NADP(+)) from Acidovorax ebreus (strain TPSY) (Diaphorobacter sp. (strain TPSY)).